The chain runs to 154 residues: Myoglobin (154 aa).

The 147-residue stretch at 2-148 (GLSDGEWQLV…FRKDMASNYK (147 aa)) folds into the Globin domain. Ser-4 bears the Phosphoserine mark. His-65 lines the nitrite pocket. His-65 contacts O2. Phosphothreonine is present on Thr-68. His-94 is a heme b binding site.

This sequence belongs to the globin family. Monomeric.

The protein localises to the cytoplasm. The protein resides in the sarcoplasm. It catalyses the reaction Fe(III)-heme b-[protein] + nitric oxide + H2O = Fe(II)-heme b-[protein] + nitrite + 2 H(+). It carries out the reaction H2O2 + AH2 = A + 2 H2O. In terms of biological role, monomeric heme protein which primary function is to store oxygen and facilitate its diffusion within muscle tissues. Reversibly binds oxygen through a pentacoordinated heme iron and enables its timely and efficient release as needed during periods of heightened demand. Depending on the oxidative conditions of tissues and cells, and in addition to its ability to bind oxygen, it also has a nitrite reductase activity whereby it regulates the production of bioactive nitric oxide. Under stress conditions, like hypoxia and anoxia, it also protects cells against reactive oxygen species thanks to its pseudoperoxidase activity. This is Myoglobin from Homo sapiens (Human).